Here is a 406-residue protein sequence, read N- to C-terminus: Multidrug resistance protein MdtG (406 aa).

The next 11 helical transmembrane spans lie at Val-16–Pro-36, Leu-56–Ala-76, Leu-90–Leu-110, Ala-113–Val-133, Thr-144–Ala-164, Pro-171–Thr-191, Leu-222–Leu-242, Ile-254–Pro-274, Ile-288–Thr-308, Phe-317–Asn-337, and Ala-376–Leu-396.

It belongs to the major facilitator superfamily. DHA1 family. MdtG (TC 2.A.1.2.20) subfamily.

Its subcellular location is the cell inner membrane. This Citrobacter koseri (strain ATCC BAA-895 / CDC 4225-83 / SGSC4696) protein is Multidrug resistance protein MdtG.